Reading from the N-terminus, the 400-residue chain is MSSGSAGAPALSNNSTNSVAKEKSGNISGDEYLSQEEEVFDGNDIENNETKVYEESLDLDLERSNRQVWLVRLPMFLAEKWRDRNNLHGQELGKIRINKDGSKITLLLNENDNDSIPHEYDLELTKKVVENEYVFTEQNLKKYQQRKKELEADPEKQRQAYLKKQEREEELKKKQQQQKRRNNRKKFNHRVMTDRDGRDRYIPYVKTIPKKTAIVGTVCHECQVMPSMNDPNYHKIVEQRRNIVKLNNKERITTLDETVGVTMSHTGMSMRSDNSNFLKVGREKAKSNIKSIRMPKKEILDYLFKLFDEYDYWSLKGLKERTRQPEAHLKECLDKVATLVKKGPYAFKYTLRPEYKKLKEEERKATLGELADEQTGSAGDNAQGDAEADLEDEIEMEDVV.

Positions 1 to 19 (MSSGSAGAPALSNNSTNSV) are enriched in polar residues. Positions 1–47 (MSSGSAGAPALSNNSTNSVAKEKSGNISGDEYLSQEEEVFDGNDIEN) are disordered. Phosphoserine occurs at positions 28, 34, and 56. Over residues 33–47 (LSQEEEVFDGNDIEN) the composition is skewed to acidic residues. Disordered regions lie at residues 165–194 (QERE…VMTD) and 366–400 (TLGE…EDVV). Residues 174-189 (KQQQQKRRNNRKKFNH) show a composition bias toward basic residues. The segment covering 386–400 (AEADLEDEIEMEDVV) has biased composition (acidic residues).

The protein belongs to the TFIIF beta subunit family. TFIIF is composed of three different subunits: TFG1/RAP74, TFG2/RAP30 and TAF14.

The protein resides in the nucleus. Functionally, TFIIF is a general transcription initiation factor that binds to RNA polymerase II. Its functions include the recruitment of RNA polymerase II to the promoter bound DNA-TBP-TFIIB complex, decreasing the affinity of RNA polymerase II for non-specific DNA, allowing for the subsequent recruitment of TFIIE and TFIIH, and facilitating RNA polymerase II elongation. The protein is Transcription initiation factor IIF subunit beta (TFG2) of Saccharomyces cerevisiae (strain ATCC 204508 / S288c) (Baker's yeast).